An 88-amino-acid chain; its full sequence is Large ribosomal subunit protein bL27 (88 aa).

The disordered stretch occupies residues 1 to 21 (MAHKKGASSSRNGRDSAAQRL).

Belongs to the bacterial ribosomal protein bL27 family.

This chain is Large ribosomal subunit protein bL27, found in Mycobacterium avium (strain 104).